Reading from the N-terminus, the 388-residue chain is Succinyl-diaminopimelate desuccinylase (388 aa).

His-75 contacts Zn(2+). Asp-77 is an active-site residue. Asp-108 serves as a coordination point for Zn(2+). Catalysis depends on Glu-142, which acts as the Proton acceptor. 3 residues coordinate Zn(2+): Glu-143, Glu-171, and His-361.

Belongs to the peptidase M20A family. DapE subfamily. Homodimer. Zn(2+) serves as cofactor. Requires Co(2+) as cofactor.

It carries out the reaction N-succinyl-(2S,6S)-2,6-diaminopimelate + H2O = (2S,6S)-2,6-diaminopimelate + succinate. The protein operates within amino-acid biosynthesis; L-lysine biosynthesis via DAP pathway; LL-2,6-diaminopimelate from (S)-tetrahydrodipicolinate (succinylase route): step 3/3. In terms of biological role, catalyzes the hydrolysis of N-succinyl-L,L-diaminopimelic acid (SDAP), forming succinate and LL-2,6-diaminopimelate (DAP), an intermediate involved in the bacterial biosynthesis of lysine and meso-diaminopimelic acid, an essential component of bacterial cell walls. This chain is Succinyl-diaminopimelate desuccinylase, found in Methylocella silvestris (strain DSM 15510 / CIP 108128 / LMG 27833 / NCIMB 13906 / BL2).